We begin with the raw amino-acid sequence, 304 residues long: UDP-N-acetylenolpyruvoylglucosamine reductase (304 aa).

Positions 33–213 (IGGPADIMVI…LEITRDLTER (181 aa)) constitute an FAD-binding PCMH-type domain. Residue arginine 177 is part of the active site. Serine 227 acts as the Proton donor in catalysis. The active site involves glutamate 297.

Belongs to the MurB family. The cofactor is FAD.

Its subcellular location is the cytoplasm. The enzyme catalyses UDP-N-acetyl-alpha-D-muramate + NADP(+) = UDP-N-acetyl-3-O-(1-carboxyvinyl)-alpha-D-glucosamine + NADPH + H(+). It participates in cell wall biogenesis; peptidoglycan biosynthesis. In terms of biological role, cell wall formation. This is UDP-N-acetylenolpyruvoylglucosamine reductase from Alkaliphilus oremlandii (strain OhILAs) (Clostridium oremlandii (strain OhILAs)).